The sequence spans 887 residues: Pyruvate, phosphate dikinase 2 (887 aa).

T467 carries the phosphothreonine; by PDRP1 modification. The active-site Tele-phosphohistidine intermediate is H469. Substrate is bound by residues R575, R632, E761, G782, T783, N784, and D785. E761 provides a ligand contact to Mg(2+). Residue D785 participates in Mg(2+) binding. The Proton donor role is filled by C847.

It belongs to the PEP-utilizing enzyme family. The cofactor is Mg(2+).

It is found in the cytoplasm. It catalyses the reaction pyruvate + phosphate + ATP = phosphoenolpyruvate + AMP + diphosphate + H(+). Functionally, formation of phosphoenolpyruvate. The protein is Pyruvate, phosphate dikinase 2 (PPDK2) of Oryza sativa subsp. japonica (Rice).